The primary structure comprises 517 residues: MEILVYIIIGIAIFILSLLVGINIGNRRMISTLATKKEELEVEIKNKQKEIEKMLKNAEEEAKALKQKELLEAKEEIHRLRQEFDSEAKQQREELKANEERLIRKEESLAKKEENLEKLKEKLEVQHENVLKLEKELETKLNEIAKMTEEEARQVVINEARDKYEREIAQKFKEIKDHYEEESKKYARWVITTAIQRYASDVTNEITTSTVALPTDDMKGRIIGREGRNIRTFEKLTGTDLIIDDTPEIVVISSFNPLRREIAKRTLEMLVADGRIHPARIEELYEKSKNEIQEYIKEVGKEAVMRVGIKQPHLEIIKLLGRLKFRTSYGQDVLEHSIEVAQFAGMMASELGLNVELAKRAALLHDLGKAVDHEVEGSHAIVGGQIAKRYGEKLEVVNAIQYHHNEVDPMTPEAVLVAASDALSASRPGARKETLENYIRRIEQLEEIAKSFRYVDKAYAIQAGRELRIIVQPDKVEDEIAEKLAHDISVQIEEKVQYPGVIKVTVIREKRSISYAS.

A helical transmembrane segment spans residues 2-22; that stretch reads EILVYIIIGIAIFILSLLVGI. Residues 207 to 267 form the KH domain; sequence TTSTVALPTD…LRREIAKRTL (61 aa). The HD domain occupies 333 to 426; the sequence is VLEHSIEVAQ…VAASDALSAS (94 aa).

Belongs to the RNase Y family.

Its subcellular location is the cell membrane. Functionally, endoribonuclease that initiates mRNA decay. This chain is Ribonuclease Y, found in Petrotoga mobilis (strain DSM 10674 / SJ95).